The primary structure comprises 576 residues: Zinc finger protein 791 (576 aa).

The KRAB domain occupies 4–90; sequence VAFEDVSVSF…AENFSPNLSV (87 aa). 17 consecutive C2H2-type zinc fingers follow at residues 100-122, 132-154, 160-182, 188-210, 216-238, 244-266, 272-294, 300-322, 328-350, 356-378, 384-406, 412-434, 440-462, 468-490, 496-518, 524-546, and 552-574; these read YECTICGKAFMRLSSLTRHMRSH, YKCKECEKAFSYLKSFQRHERSH, YKCKQCGKTFIYHQPFQRHERTH, YECKQCGKALSCSSSLRVHERIH, YECKQCGKAFSCSSSIRVHERTH, YACKECGKAFISHTSVLTHMITH, YKCKECGKAFIFPSFLRVHERIH, YKCKQCGKAFRCSTSIQIHERIH, YKCKECGKSFSARPAFRVHVRVH, YKCKECGKAFSRISYFRIHERTH, YECKKCGKTFNYPLDLKIHKRNH, YECKECAKTFISLENFRRHMITH, YKCRDCGKVFIFPSALRTHERTH, YECKQCGKAFSCSSYIRIHKRTH, YECKECGKAFIYPTSFQGHMRMH, YKCKECGKAFSLHSSFQRHTRIH, and LECKQCGKAFSVSTSLKKHMRMH.

The protein belongs to the krueppel C2H2-type zinc-finger protein family.

Its subcellular location is the nucleus. Its function is as follows. May be involved in transcriptional regulation. This chain is Zinc finger protein 791 (ZNF791), found in Homo sapiens (Human).